Consider the following 651-residue polypeptide: Cysteine-rich receptor-like protein kinase 42 (651 aa).

Positions 1 to 28 (MRCLTKTRSFHYVIIFYSFFFLPFLSSS) are cleaved as a signal peptide. At 29–251 (SDDQRTTVSG…HHKFHVLFNK (223 aa)) the chain is on the extracellular side. Gnk2-homologous domains lie at 35-135 (TVSG…TYEF) and 137-236 (DESV…DHKF). N-linked (GlcNAc...) asparagine glycosylation is found at Asn-79 and Asn-151. The chain crosses the membrane as a helical span at residues 252-272 (GVIVAIVLTTSAFVMLILLAT). Topologically, residues 273-651 (YVIMTKVSKT…SSESSTTRTI (379 aa)) are cytoplasmic. Residues 315 to 604 (FSHKKMLGQG…IPSPTSPPFL (290 aa)) form the Protein kinase domain. ATP is bound by residues 321–329 (LGQGGNGTV) and Lys-343. At Tyr-388 the chain carries Phosphotyrosine. The active-site Proton acceptor is Asp-440. 2 positions are modified to phosphoserine: Ser-444 and Ser-473. Residues Thr-474 and Thr-479 each carry the phosphothreonine modification. A Phosphotyrosine modification is found at Tyr-487.

The protein belongs to the protein kinase superfamily. Ser/Thr protein kinase family. CRK subfamily.

It is found in the membrane. The catalysed reaction is L-seryl-[protein] + ATP = O-phospho-L-seryl-[protein] + ADP + H(+). The enzyme catalyses L-threonyl-[protein] + ATP = O-phospho-L-threonyl-[protein] + ADP + H(+). The protein is Cysteine-rich receptor-like protein kinase 42 (CRK42) of Arabidopsis thaliana (Mouse-ear cress).